The primary structure comprises 240 residues: C-type lectin domain family 4 member A (240 aa).

At 1–48 (MASEITYAEVRIKNESNSSVTYSGSPAAPREKPTRHLSKPGSLLVPFT) the chain is on the cytoplasmic side. Positions 5 to 10 (ITYAEV) match the ITIM motif motif. A disordered region spans residues 18–38 (SSVTYSGSPAAPREKPTRHLS). The chain crosses the membrane as a helical; Signal-anchor for type II membrane protein span at residues 49–69 (SLMVLLLLLAITFLVAFIIYF). Residues 70 to 240 (QKYSQFLEEK…SVCQMKKIQL (171 aa)) lie on the Extracellular side of the membrane. 3 cysteine pairs are disulfide-bonded: cysteine 107–cysteine 118, cysteine 140–cysteine 233, and cysteine 208–cysteine 225. In terms of domain architecture, C-type lectin spans 129 to 235 (SKASWSESEK…SGKQQSVCQM (107 aa)). Ca(2+)-binding residues include valine 149 and glutamate 155. A glycan (N-linked (GlcNAc...) asparagine) is linked at asparagine 190. Glutamate 200, serine 202, and glutamate 206 together coordinate Ca(2+). Alpha-D-mannopyranose is bound by residues 200-202 (EPS) and glutamate 206. Position 211 to 213 (211 to 213 (INH)) interacts with N-acetyl-D-glucosamine. Ca(2+) is bound by residues asparagine 221 and aspartate 222.

May interact with PTPN6 via its ITIM site. In terms of tissue distribution, expressed by myeloid cells (dendritic cells, macrophages, and neutrophils) and B-cells.

It is found in the cell membrane. Its function is as follows. C-type lectin receptor that binds carbohydrates mannose and fucose but also weakly interacts with N-acetylglucosamine (GlcNAc) in a Ca(2+)-dependent manner. Involved in regulating immune reactivity. Once triggered by antigen, it is internalized by clathrin-dependent endocytosis and delivers its antigenic cargo into the antigen presentation pathway resulting in cross-priming of CD8(+) T cells. This cross-presentation and cross-priming are enhanced by TLR7 and TLR8 agonists with increased expansion of the CD8(+) T cells, high production of IFNG and TNF with reduced levels of IL4, IL5 and IL13. In plasmacytoid dendritic cells, inhibits TLR9-mediated IFNA and TNF production. May be involved via its ITIM motif (immunoreceptor tyrosine-based inhibitory motifs) in the inhibition of B-cell-receptor-mediated calcium mobilization and protein tyrosine phosphorylation. The chain is C-type lectin domain family 4 member A (Clec4a) from Rattus norvegicus (Rat).